We begin with the raw amino-acid sequence, 1437 residues long: IQ domain-containing protein N (1437 aa).

Positions 84-112 (SRAATVIQASWKGYRLRQKLISQMTAAKA) constitute an IQ 1 domain. 3 disordered regions span residues 332–353 (TSPTSPVIRLPAPVGPNSSLSN), 416–440 (SQAQTYTVSTSSKTSPSSPTVKPSP), and 848–878 (STGSRAKPDDRSVAQPQLHSHAPNKTMQNPR). Over residues 422 to 440 (TVSTSSKTSPSSPTVKPSP) the composition is skewed to low complexity. Polar residues predominate over residues 861–878 (AQPQLHSHAPNKTMQNPR). IQ domains lie at 1190–1216 (QAVVTIQACARGYLVRRTVKVWHQWAT), 1217–1239 (IIQATWRGYRVRRNLERLFRATT), 1240–1258 (IIQAAWRGYCIRRARARQV), 1361–1389 (QHRACTIIQAAWKGYRTRRQLSQKQSAAK), and 1390–1413 (MVQAVWRGHYTRSCLTTDALLGTG).

As to quaternary structure, interacts with calmodulin. In terms of tissue distribution, expressed in testis, in elongating spermatids (at protein level).

Functionally, essential for spermiogenesis and fertilization. May be required for manchette assembly in elongating spermatids. This Mus musculus (Mouse) protein is IQ domain-containing protein N (Iqcn).